Consider the following 393-residue polypeptide: GDSL esterase/lipase At1g28600 (393 aa).

The first 22 residues, 1–22 (MASLDSLVIFLFSTLFVTIVSS), serve as a signal peptide directing secretion. Serine 38 functions as the Nucleophile in the catalytic mechanism. N-linked (GlcNAc...) asparagine glycosylation is found at asparagine 133 and asparagine 317. Active-site residues include aspartate 340 and histidine 343. The N-linked (GlcNAc...) asparagine glycan is linked to asparagine 382.

Belongs to the 'GDSL' lipolytic enzyme family.

It is found in the secreted. The polypeptide is GDSL esterase/lipase At1g28600 (Arabidopsis thaliana (Mouse-ear cress)).